A 937-amino-acid chain; its full sequence is Proprotein convertase subtilisin/kexin type 6 (937 aa).

Residues 1–16 (MPPRAPPAPGPRPPPR) are compositionally biased toward pro residues. The interval 1-22 (MPPRAPPAPGPRPPPRAAGRHG) is disordered. A signal peptide spans 1–45 (MPPRAPPAPGPRPPPRAAGRHGLSPLAPRPWRWLLLLALPAVCSA). A propeptide spanning residues 46–132 (LPPPRPVYTN…QQEVKRRVKR (87 aa)) is cleaved from the precursor. Residues 149–468 (MWYMHCADKN…FGLVDAEALV (320 aa)) enclose the Peptidase S8 domain. Catalysis depends on charge relay system residues aspartate 186 and histidine 227. A glycan (N-linked (GlcNAc...) asparagine) is linked at asparagine 240. Serine 401 acts as the Charge relay system in catalysis. The P/Homo B domain occupies 476–616 (AVPSQHMCVA…SLILYGTAEH (141 aa)). Positions 534–536 (RGD) match the Cell attachment site motif. Residues 621–656 (FSSHQSRSRMLELSVPEQEPLKAEGPPPQAETPEEE) are disordered. 5 FU repeats span residues 660–707 (TGVC…GYFG), 711–758 (ARRC…GLYA), 762–806 (QRLC…GTYF), 810–855 (LIRC…GFYP), and 863–911 (HKVC…ETFC). Residues 680-898 (CLNCVHFSLG…GFTQLGTSCI (219 aa)) are CRM (Cys-rich motif). 2 N-linked (GlcNAc...) asparagine glycosylation sites follow: asparagine 882 and asparagine 900. Positions 899 to 937 (TNHTCSNADETFCEMVKSNRLCERKLFIQFCCRTCLLAG) constitute a PLAC domain.

Belongs to the peptidase S8 family. The precursor protein seems to exist in the reticulum endoplasmic as both a monomer and a dimer-sized complex whereas mature form exists only as a monomer, suggesting that propeptide cleavage affects its tertiary or quaternary structure. Interacts (immature form including the propeptide) with RCN3; probably involved in the maturation and the secretion of PCSK6. It depends on Ca(2+) as a cofactor. High expression in the anterior pituitary and in several brain regions, the atrium, and the ventricle.

Its function is as follows. Serine endoprotease that processes various proproteins by cleavage at paired basic amino acids, recognizing the RXXX[KR]R consensus motif. Likely functions in the constitutive secretory pathway, with unique restricted distribution in both neuroendocrine and non-neuroendocrine tissues. The sequence is that of Proprotein convertase subtilisin/kexin type 6 (Pcsk6) from Rattus norvegicus (Rat).